A 260-amino-acid polypeptide reads, in one-letter code: Snake venom serine protease homolog (260 aa).

A signal peptide spans M1–A18. Residues Q19–L24 constitute a propeptide that is removed on maturation. One can recognise a Peptidase S1 domain in the interval I25–A251. Intrachain disulfides connect C31–C165, C52–C68, C100–C258, C144–C212, C176–C191, and C202–C227. The active-site Charge relay system is the D112. N-linked (GlcNAc...) asparagine glycans are attached at residues N123 and N124. S206 acts as the Charge relay system in catalysis.

It belongs to the peptidase S1 family. Snake venom subfamily. As to expression, expressed by the venom gland.

The protein localises to the secreted. Its function is as follows. Snake venom serine protease homolog. May act in the hemostasis system of the prey. The chain is Snake venom serine protease homolog from Protobothrops jerdonii (Jerdon's pitviper).